A 387-amino-acid polypeptide reads, in one-letter code: Succinate--CoA ligase [ADP-forming] subunit beta (387 aa).

The ATP-grasp domain maps to 9–245; that stretch reads KDLLESYGLK…KSQENAKELK (237 aa). ATP-binding positions include Lys-46, 53–55, Glu-100, Tyr-103, and Glu-108; that span reads GRG. Asn-200 and Asp-214 together coordinate Mg(2+). Substrate is bound by residues Asn-265 and 322 to 324; that span reads GIV.

It belongs to the succinate/malate CoA ligase beta subunit family. Heterotetramer of two alpha and two beta subunits. Mg(2+) serves as cofactor.

The catalysed reaction is succinate + ATP + CoA = succinyl-CoA + ADP + phosphate. It catalyses the reaction GTP + succinate + CoA = succinyl-CoA + GDP + phosphate. It participates in carbohydrate metabolism; tricarboxylic acid cycle; succinate from succinyl-CoA (ligase route): step 1/1. Functionally, succinyl-CoA synthetase functions in the citric acid cycle (TCA), coupling the hydrolysis of succinyl-CoA to the synthesis of either ATP or GTP and thus represents the only step of substrate-level phosphorylation in the TCA. The beta subunit provides nucleotide specificity of the enzyme and binds the substrate succinate, while the binding sites for coenzyme A and phosphate are found in the alpha subunit. This chain is Succinate--CoA ligase [ADP-forming] subunit beta, found in Francisella tularensis subsp. tularensis (strain WY96-3418).